Consider the following 380-residue polypeptide: Geranylgeranyl pyrophosphate synthase cle6 (380 aa).

Positions methionine 1–methionine 19 are enriched in low complexity. The disordered stretch occupies residues methionine 1 to glutamine 55. Residues histidine 45–glutamine 55 are compositionally biased toward polar residues. Isopentenyl diphosphate is bound by residues lysine 102, arginine 105, and histidine 134. Aspartate 141 and aspartate 145 together coordinate Mg(2+). Arginine 150 is a dimethylallyl diphosphate binding site. Position 151 (arginine 151) interacts with isopentenyl diphosphate. Dimethylallyl diphosphate-binding residues include lysine 229, threonine 230, and glutamine 263. Aspartate 266 provides a ligand contact to Mg(2+). Asparagine 270, lysine 280, and lysine 290 together coordinate dimethylallyl diphosphate.

This sequence belongs to the FPP/GGPP synthase family. Requires Mg(2+) as cofactor.

It carries out the reaction isopentenyl diphosphate + dimethylallyl diphosphate = (2E)-geranyl diphosphate + diphosphate. It catalyses the reaction isopentenyl diphosphate + (2E)-geranyl diphosphate = (2E,6E)-farnesyl diphosphate + diphosphate. The enzyme catalyses isopentenyl diphosphate + (2E,6E)-farnesyl diphosphate = (2E,6E,10E)-geranylgeranyl diphosphate + diphosphate. It functions in the pathway secondary metabolite biosynthesis; terpenoid biosynthesis. In terms of biological role, geranylgeranyl pyrophosphate synthase; part of the cluster A that mediates the biosynthesis of chevalone E and its oxidized derivatives that possess a unique five-membered lactone ring and can synergistically enhance the cytotoxicity of doxorubicin (DOX) in breast cancer cells. Within the pathway, cle6 takes part to the biosynthesis of the molecular scaffold by providing geranylgeranyl pyrophosphate (GGPP) to the prenyltransferase cle5 for C-3 geranylgeranylation of triacetic acid lactone. The molecular scaffold is commonly biosynthesized by a series of enzymes including the non-reducing polyketide synthase (NR-PKS) cle1 that produces the alpha-pyrone triacetic acid lactone (TAL); The membrane-bound prenyltransferase cle5 that accepts TAL as its substrate to perform a C-3 geranylgeranylation reaction, in which the pathway-dedicated GGPS cle6 is required to provide GGPP, the other substrate of cle5; the FAD-dependent monooxygenase Cle3 that forms an (S)-epoxide ring at the terminal olefin of the geranylgeranyl group; and the terpene cyclase Cle7 that catalyzes the cyclization of the prenyl group that yields the pentacyclic pathway intermediate chevalone E. Chevalone E can derivatize into seven new oxidized analogs by the cytochrome P450 monooxygenases cle2 (acting at C-20) and cle4 (acting at C-11 and C-12). This Aspergillus versicolor protein is Geranylgeranyl pyrophosphate synthase cle6.